The primary structure comprises 92 residues: Non-specific lipid-transfer protein 1 (92 aa).

4 cysteine pairs are disulfide-bonded: Cys-4–Cys-52, Cys-14–Cys-28, Cys-29–Cys-74, and Cys-50–Cys-88.

It belongs to the plant LTP family. In terms of tissue distribution, expressed in seeds and, at very low levels, in pulp of fruit (at protein level).

In terms of biological role, plant non-specific lipid-transfer proteins transfer phospholipids as well as galactolipids across membranes. May play a role in wax or cutin deposition in the cell walls of expanding epidermal cells and certain secretory tissues. The protein is Non-specific lipid-transfer protein 1 of Actinidia deliciosa (Kiwi).